We begin with the raw amino-acid sequence, 200 residues long: dITP/XTP pyrophosphatase (200 aa).

Residue 7–12 (TSNKHK) participates in substrate binding. Mg(2+)-binding residues include E38 and D73. The active-site Proton acceptor is D73. Residues S74, 154–157 (FGYD), K177, and 182–183 (HR) each bind substrate.

The protein belongs to the HAM1 NTPase family. Homodimer. It depends on Mg(2+) as a cofactor.

It catalyses the reaction XTP + H2O = XMP + diphosphate + H(+). The catalysed reaction is dITP + H2O = dIMP + diphosphate + H(+). The enzyme catalyses ITP + H2O = IMP + diphosphate + H(+). Functionally, pyrophosphatase that catalyzes the hydrolysis of nucleoside triphosphates to their monophosphate derivatives, with a high preference for the non-canonical purine nucleotides XTP (xanthosine triphosphate), dITP (deoxyinosine triphosphate) and ITP. Seems to function as a house-cleaning enzyme that removes non-canonical purine nucleotides from the nucleotide pool, thus preventing their incorporation into DNA/RNA and avoiding chromosomal lesions. The protein is dITP/XTP pyrophosphatase of Campylobacter jejuni subsp. doylei (strain ATCC BAA-1458 / RM4099 / 269.97).